We begin with the raw amino-acid sequence, 257 residues long: Putative hydro-lyase Bamb_5282 (257 aa).

It belongs to the D-glutamate cyclase family.

The protein is Putative hydro-lyase Bamb_5282 of Burkholderia ambifaria (strain ATCC BAA-244 / DSM 16087 / CCUG 44356 / LMG 19182 / AMMD) (Burkholderia cepacia (strain AMMD)).